A 188-amino-acid polypeptide reads, in one-letter code: Peptidyl-tRNA hydrolase (188 aa).

Tyr15 is a binding site for tRNA. The active-site Proton acceptor is the His20. Positions 63, 65, and 111 each coordinate tRNA.

It belongs to the PTH family. In terms of assembly, monomer.

The protein resides in the cytoplasm. It catalyses the reaction an N-acyl-L-alpha-aminoacyl-tRNA + H2O = an N-acyl-L-amino acid + a tRNA + H(+). Hydrolyzes ribosome-free peptidyl-tRNAs (with 1 or more amino acids incorporated), which drop off the ribosome during protein synthesis, or as a result of ribosome stalling. Its function is as follows. Catalyzes the release of premature peptidyl moieties from peptidyl-tRNA molecules trapped in stalled 50S ribosomal subunits, and thus maintains levels of free tRNAs and 50S ribosomes. The chain is Peptidyl-tRNA hydrolase from Hydrogenobaculum sp. (strain Y04AAS1).